A 246-amino-acid chain; its full sequence is 1-(5-phosphoribosyl)-5-[(5-phosphoribosylamino)methylideneamino] imidazole-4-carboxamide isomerase (246 aa).

D8 functions as the Proton acceptor in the catalytic mechanism. The active-site Proton donor is the D131.

Belongs to the HisA/HisF family.

The protein localises to the cytoplasm. It catalyses the reaction 1-(5-phospho-beta-D-ribosyl)-5-[(5-phospho-beta-D-ribosylamino)methylideneamino]imidazole-4-carboxamide = 5-[(5-phospho-1-deoxy-D-ribulos-1-ylimino)methylamino]-1-(5-phospho-beta-D-ribosyl)imidazole-4-carboxamide. The protein operates within amino-acid biosynthesis; L-histidine biosynthesis; L-histidine from 5-phospho-alpha-D-ribose 1-diphosphate: step 4/9. The polypeptide is 1-(5-phosphoribosyl)-5-[(5-phosphoribosylamino)methylideneamino] imidazole-4-carboxamide isomerase (Albidiferax ferrireducens (strain ATCC BAA-621 / DSM 15236 / T118) (Rhodoferax ferrireducens)).